We begin with the raw amino-acid sequence, 530 residues long: Polyprotein pp62 (530 aa).

Belongs to the asfivirus polyprotein pp62 family. Monomer. Predominantly exists as a monomer, with very little dimers. Homodimerization seems to be linked to low pH. As to quaternary structure, homodimer; disulfide-linked. Homotrimer; disulfide-linked. Homohexamer. Post-translationally, monoubiquitinated in vitro by viral UBCv1. Specific enzymatic cleavages in vivo by the viral pS273R protease yield mature proteins.

The protein localises to the host cytoplasm. The protein resides in the host perinuclear region. It localises to the virion. Essential for the correct assembly and maturation of the core of the virion. Its function is as follows. Component of the core shell. Binds to phosphatidylserine, which may enable the core shell binding with the inner membrane. In terms of biological role, component of the core shell. Binds to phosphatidylserine and DNA, which may link the core shell to the inner membrane and to the viral nucleoid. Functionally, component of the core shell. This African swine fever virus (strain Badajoz 1971 Vero-adapted) (Ba71V) protein is Polyprotein pp62.